Reading from the N-terminus, the 524-residue chain is Fusicoccadiene C-8 hydroxylase (524 aa).

Residues 16–36 (LQLLCIGPLVYACVSFIIKIV) form a helical membrane-spanning segment. Asn126 and Asn344 each carry an N-linked (GlcNAc...) asparagine glycan. Residue Cys465 coordinates heme. Asn496 is a glycosylation site (N-linked (GlcNAc...) asparagine).

It belongs to the cytochrome P450 family. Requires heme as cofactor.

The protein resides in the membrane. Its pathway is mycotoxin biosynthesis. Its function is as follows. Cytochrome P450 monooxygenase; part of the 2 gene clusters that mediate the biosynthesis of fusicoccins, diterpene glucosides that display phytohormone-like activity and function as potent activators of plasma membrane H(+)-ATPases in plants by modifying 14-3-3 proteins and cause the plant disease constriction canker. The first step in the pathway is performed by the fusicoccadiene synthase PaFS that possesses both prenyl transferase and terpene cyclase activity, converting isopentenyl diphosphate and dimethylallyl diphosphate into geranylgeranyl diphosphate (GGDP) and successively converting GGDP into fusicocca-2,10(14)-diene, a precursor for fusicoccin H. The second step is the oxidation at the C-8 position by the cytochrome P450 monooxygenase PaP450-2 to yield fusicocca-2,10(14)-diene-8-beta-ol. The cytochrome P450 monooxygenase PaP450-1 then catalyzes the hydroxylation at the C-16 position to produce fusicocca-2,10(14)-diene-8-beta,16-diol. The dioxygenase fc-dox then catalyzes the 16-oxydation of fusicocca-2,10(14)-diene-8-beta,16-diol to yield an aldehyde (8-beta-hydroxyfusicocca-1,10(14)-dien-16-al). The short-chain dehydrogenase/reductase fc-sdr catalyzes the reduction of the aldehyde to yield fusicocca-1,10(14)-diene-8-beta,16-diol. The next step is the hydroxylation at C-9 performed by the cytochrome P450 monooxygenase PaP450-3 that leads to fusicoccin H aglycon which is glycosylated to fusicoccin H by the O-glycosyltransferase PaGT. Hydroxylation at C-12 by the cytochrome P450 monooxygenase PaP450-4 leads then to the production of fusicoccin Q and is followed by methylation by the O-methyltransferase PaMT to yield fusicoccin P. Fusicoccin P is further converted to fusicoccin J via prenylation by the O-glucose prenyltransferase PaPT. Cytochrome P450 monooxygenase PaP450-5 then performs hydroxylation at C-19 to yield dideacetyl-fusicoccin A which is acetylated to 3'-O-deacetyl-fusicoccin A by the O-acetyltransferase PaAT-2. Finally, a another acetylation by the O-acetyltransferase PaAT-1 yields fusicoccin A. In Phomopsis amygdali (Fusicoccum amygdali), this protein is Fusicoccadiene C-8 hydroxylase.